The primary structure comprises 602 residues: Baseplate wedge protein gp10 (602 aa).

Residues 501–512 (LNNNDLDSGGNP) show a composition bias toward polar residues. The segment at 501–523 (LNNNDLDSGGNPSHTAGGTGGST) is disordered.

This sequence belongs to the T4likevirus baseplate wedge protein gp10 family. In terms of assembly, homotrimer; disulfide-linked. Heteromultimer with gp7; a gp10 molecule is disulfide-linked to gp7 and the other two remaining gp10 molecules form a disulfide bond. The gp10 trimer interacts with gp11 trimer and with the short tail fiber (STF) composed of the gp12 trimer. Part of the baseplate macromolecular complex which consists of gp5, gp5.4, gp27 (central spike complex); gp6, gp25, gp53 (inner baseplate); gp7, gp8 (intermediate baseplate); gp9, gp10, gp11, gp12 (peripheral); gp48 and gp54 (proximal region of the tail tube).

Its subcellular location is the virion. In terms of biological role, peripheral baseplate protein that is part of the tail fiber network. Connects the short tail fibers to the baseplate. During infection, the baseplate undergoes a conformational change from a dome-shaped to a star-shaped structure. At this point, gp10 rotates and acts as a lever that unfolds the short tail fibers, which then interact with host cell surface receptors. Involved in the tail assembly. This chain is Baseplate wedge protein gp10 (10), found in Escherichia coli (Bacteriophage T4).